The following is a 241-amino-acid chain: MTSQLAGFKGTRGTLLVGIGGCSSSGKSTIAKLAVQVLEDAVLVHQDDFYRHDDEVPFDEEYQIGNWDVPEALDMAQFERELDHIRATGRPAAKLVHNGNIDDVGKFGISEEYLEELRRRYRGRISQPVVLVDGFMLYHDDKVAARFDCRLLVRAPYATMKARRASRGGYKTLDSFWQDPPFYFDKFVYKSYAATHARLFRNCDVEDRLVAPDVQEIYNGDEAQITCVLEQVLDAIAAAQC.

An ATP-binding site is contributed by 21 to 29 (GCSSSGKST). Mg(2+) contacts are provided by S28 and D47. Residue D47 is the Proton acceptor of the active site. Substrate-binding positions include 47-50 (DDFY), 67-68 (WD), and D68. R163 is an ATP binding site. R164 provides a ligand contact to substrate. ATP contacts are provided by residues R167, 167 to 169 (RGG), and 213 to 215 (DVQ). Position 169–170 (169–170 (GY)) interacts with substrate.

The protein belongs to the uridine kinase family. NRK subfamily.

The catalysed reaction is beta-nicotinamide D-riboside + ATP = beta-nicotinamide D-ribonucleotide + ADP + H(+). It carries out the reaction beta-D-ribosylnicotinate + ATP = nicotinate beta-D-ribonucleotide + ADP + H(+). Its pathway is cofactor biosynthesis; NAD(+) biosynthesis. Functionally, catalyzes the phosphorylation of nicotinamide riboside (NR) and nicotinic acid riboside (NaR) to form nicotinamide mononucleotide (NMN) and nicotinic acid mononucleotide (NaMN). This is Nicotinamide riboside kinase (NRK1) from Eremothecium gossypii (strain ATCC 10895 / CBS 109.51 / FGSC 9923 / NRRL Y-1056) (Yeast).